A 796-amino-acid chain; its full sequence is Peroxisome proliferator-activated receptor gamma coactivator 1-alpha (796 aa).

The residue at position 77 (Lys77) is an N6-acetyllysine. The segment at 98–138 (PVDEDGLPSFDALTDGDVTTDNEASPSSMPDGTPPPQEAEE) is disordered. Residues 114–127 (DVTTDNEASPSSMP) are compositionally biased toward polar residues. Residues 142-146 (LKKLL) carry the LXXLL motif motif. Residue Lys144 is modified to N6-acetyllysine. Thr176 carries the phosphothreonine; by AMPK modification. Position 182 is an N6-acetyllysine (Lys182). The tract at residues 211 to 275 (YLTTNDDPPH…NDPKGSPFEN (65 aa)) is disordered. Residues 217–235 (DPPHTKPTENRNSSRDKCA) are compositionally biased toward basic and acidic residues. The span at 242-258 (TQPQSQHAQAKPTTLSL) shows a compositional bias: polar residues. Lys252, Lys269, Lys276, Lys319, Lys345, Lys411, Lys440, and Lys449 each carry N6-acetyllysine. A disordered region spans residues 288 to 350 (GTAGLTPPTT…HSTKKGPEQS (63 aa)). The interaction with PPARG stretch occupies residues 291 to 337 (GLTPPTTPPHKANQDNPFKASPKLKPSCKTVVPPPTKRARYSECSGT). The segment at 348-796 (EQSELYAQLS…LKEAQRSLRR (449 aa)) is mediates interaction with RNF34. Ser537 carries the phosphoserine; by AMPK modification. Disordered stretches follow at residues 541 to 597 (FNSP…SSRS) and 611 to 669 (HRNS…QKQK). Residues 561-576 (QRMRSRSRSFSRHRSC) show a composition bias toward basic residues. Over residues 577–597 (SRSPYSRSRSRSPGSRSSSRS) the composition is skewed to low complexity. Residues 620 to 629 (SRSRSPYSRR) show a composition bias toward basic residues. Positions 630–669 (PRYDSYEANEHERLKRDEYRREYEKRESERAKQRERQKQK) are enriched in basic and acidic residues. The RRM domain occupies 675-751 (RVIYVGKIRP…TDFELYFCGR (77 aa)). Lys756 and Lys777 each carry N6-acetyllysine.

Homooligomer. Interacts with MYBBP1A; inhibits MYBBP1A transcriptional activation. Interacts with PRDM16, LPIN1 and PML. Interacts (via LXXLL motif) with RORA and RORC (via AF-2 motif); activates RORA and RORC transcriptional activation. Interacts with LRPPRC. Interacts with FOXO1. Interacts with NR5A2. Phosphorylation by AMPK in skeletal muscle increases activation of its own promoter. Phosphorylated by CLK2. Post-translationally, heavily acetylated by KAT2A/GCN5 under conditions of high nutrients, leading to inactivation of PPARGC1A. Deacetylated by SIRT1 in low nutrients/high NAD conditions, leading to its activation. In terms of processing, ubiquitinated. Ubiquitination by RNF34 induces proteasomal degradation.

The protein resides in the nucleus. The protein localises to the PML body. Transcriptional coactivator for steroid receptors and nuclear receptors. Greatly increases the transcriptional activity of PPARG and thyroid hormone receptor on the uncoupling protein promoter. Can regulate key mitochondrial genes that contribute to the program of adaptive thermogenesis. Plays an essential role in metabolic reprogramming in response to dietary availability through coordination of the expression of a wide array of genes involved in glucose and fatty acid metabolism. Acts as a key regulator of gluconeogenesis: stimulates hepatic gluconeogenesis by increasing the expression of gluconeogenic enzymes, and acting together with FOXO1 to promote the fasting gluconeogenic program. Induces the expression of PERM1 in the skeletal muscle in an ESRRA-dependent manner. Also involved in the integration of the circadian rhythms and energy metabolism. Required for oscillatory expression of clock genes, such as BMAL1 and NR1D1, through the coactivation of RORA and RORC, and metabolic genes, such as PDK4 and PEPCK. In Rattus norvegicus (Rat), this protein is Peroxisome proliferator-activated receptor gamma coactivator 1-alpha (Ppargc1a).